A 1605-amino-acid polypeptide reads, in one-letter code: Sister chromatid cohesion protein PDS5 homolog A (1605 aa).

HEAT repeat units lie at residues lysine 50–proline 89, asparagine 96–cysteine 136, aspartate 146–glutamate 183, aspartate 184–proline 221, glutamine 261–arginine 298, glutamate 302–leucine 339, alanine 341–threonine 378, isoleucine 380–leucine 416, alanine 552–phenylalanine 591, serine 644–glutamate 681, lysine 723–proline 758, alanine 821–alanine 860, leucine 961–leucine 1000, and histidine 1050–glutamate 1088. 2 disordered regions span residues leucine 1155–valine 1182 and glutamate 1203–glutamine 1262. The span at serine 1211 to glycine 1225 shows a compositional bias: basic and acidic residues. Positions asparagine 1226–alanine 1233 match the Nuclear localization signal 1 motif. Phosphoserine is present on serine 1274. The span at asparagine 1279–leucine 1295 shows a compositional bias: basic and acidic residues. Disordered stretches follow at residues asparagine 1279–leucine 1307, glutamate 1324–alanine 1353, and glycine 1423–isoleucine 1605. Serine 1299 carries the phosphoserine modification. Composition is skewed to basic residues over residues threonine 1425–serine 1442 and lysine 1464–leucine 1476. The short motif at alanine 1426–lysine 1433 is the Nuclear localization signal 2 element. 3 stretches are compositionally biased toward basic and acidic residues: residues histidine 1477–arginine 1495, glycine 1514–glutamate 1527, and valine 1534–glutamate 1574. Residues serine 1524, serine 1562, and serine 1584 each carry the phosphoserine modification. The segment covering arginine 1575–aspartate 1585 has biased composition (acidic residues). Threonine 1588 carries the post-translational modification Phosphothreonine.

Belongs to the PDS5 family. Interacts with the cohesin complex. Interacts with DEK3.

Its subcellular location is the nucleus. Cohesin cofactor dispensable during the meiotic division but playing an important role in DNA repair by homologous recombination (HR) probably by helping SMC5/SMC6 complex. Regulator of sister chromatid cohesion in mitosis which may stabilize cohesin complex association with chromatin. May couple sister chromatid cohesion during mitosis to DNA replication. Cohesion ensures that chromosome partitioning is accurate in both meiotic and mitotic cells and plays an important role in DNA repair. The sequence is that of Sister chromatid cohesion protein PDS5 homolog A from Arabidopsis thaliana (Mouse-ear cress).